The chain runs to 148 residues: uncharacterized protein (148 aa).

A disordered region spans residues 1 to 108 (MGRAGPRSTA…PSRLRGKRSL (108 aa)). The segment covering 22 to 42 (RRPRPWQKPTSPRRLHRRRPR) has biased composition (basic residues). The span at 88–97 (DTSASNPSQR) shows a compositional bias: polar residues.

This is an uncharacterized protein from Homo sapiens (Human).